Reading from the N-terminus, the 443-residue chain is Glutamate--tRNA ligase 1 (443 aa).

Positions 8-18 match the 'HIGH' region motif; that stretch reads PSPTGRLHVGN. Positions 239–243 match the 'KMSKS' region motif; sequence KLSKR. Lysine 242 serves as a coordination point for ATP.

The protein belongs to the class-I aminoacyl-tRNA synthetase family. Glutamate--tRNA ligase type 1 subfamily. As to quaternary structure, monomer.

The protein resides in the cytoplasm. The enzyme catalyses tRNA(Glu) + L-glutamate + ATP = L-glutamyl-tRNA(Glu) + AMP + diphosphate. Its function is as follows. Catalyzes the attachment of glutamate to tRNA(Glu) in a two-step reaction: glutamate is first activated by ATP to form Glu-AMP and then transferred to the acceptor end of tRNA(Glu). The chain is Glutamate--tRNA ligase 1 from Rhizorhabdus wittichii (strain DSM 6014 / CCUG 31198 / JCM 15750 / NBRC 105917 / EY 4224 / RW1) (Sphingomonas wittichii).